Reading from the N-terminus, the 675-residue chain is Dihydrolipoyllysine-residue acetyltransferase component of pyruvate dehydrogenase complex (675 aa).

The 76-residue stretch at 2 to 77 folds into the Lipoyl-binding 1 domain; it reads AFSVEMPELG…DVGGVIAIIG (76 aa). Lysine 43 is modified (N6-lipoyllysine). Residues 77-124 form a disordered region; sequence GDADETPANEAPADEAPAPAEEEEPVKEEPKKEAAPEAPAATGAATDV. Composition is skewed to low complexity over residues 84–95 and 112–124; these read ANEAPADEAPAP and PEAPAATGAATDV. The Lipoyl-binding 2 domain occupies 121 to 196; the sequence is ATDVEMPELG…DVGAVIARIG (76 aa). Lysine 162 bears the N6-lipoyllysine mark. Residues 200 to 240 form a disordered region; the sequence is AAAAPAEEEAAPAEEEEPVKEEPKKEAAPEAPAATGAATDV. A compositionally biased stretch (acidic residues) spans 205-218; it reads AEEEAAPAEEEEPV. Positions 237-312 constitute a Lipoyl-binding 3 domain; it reads ATDVEMPELG…DVGAVIARIG (76 aa). Lysine 278 carries the post-translational modification N6-lipoyllysine. The tract at residues 316 to 368 is disordered; the sequence is AAAAPAEEEAAPAEEEEPVKEEPKKEEPKKEEPKKEAATTPAAASATVSASGD. Residues 321 to 334 are compositionally biased toward acidic residues; that stretch reads AEEEAAPAEEEEPV. Residues 335 to 352 show a composition bias toward basic and acidic residues; that stretch reads KEEPKKEEPKKEEPKKEA. A compositionally biased stretch (low complexity) spans 353–366; sequence ATTPAAASATVSAS. The Peripheral subunit-binding (PSBD) domain occupies 372–409; the sequence is YVTPLVRKLAEKHGVDLNTVTGTGIGGRIRKQDVLAAA. Catalysis depends on residues histidine 645 and aspartate 649.

This sequence belongs to the 2-oxoacid dehydrogenase family. As to quaternary structure, forms a 24-polypeptide structural core with octahedral symmetry. Part of an unusual ODH/PDH supercomplex, consisting of AceE (E1), AceF (E2), and Lpd (E3) together with OdhA (E1+E2). Requires (R)-lipoate as cofactor.

The catalysed reaction is N(6)-[(R)-dihydrolipoyl]-L-lysyl-[protein] + acetyl-CoA = N(6)-[(R)-S(8)-acetyldihydrolipoyl]-L-lysyl-[protein] + CoA. Functionally, is essential for both 2-oxoglutarate dehydrogenase (ODH) and pyruvate dehydrogenase (PDH) activities, but AceF has exclusively transacetylase (and no transsuccinylase) activity. The lipoyl residues required for ODH activity are likely provided by AceF. The chain is Dihydrolipoyllysine-residue acetyltransferase component of pyruvate dehydrogenase complex (aceF) from Corynebacterium glutamicum (strain ATCC 13032 / DSM 20300 / JCM 1318 / BCRC 11384 / CCUG 27702 / LMG 3730 / NBRC 12168 / NCIMB 10025 / NRRL B-2784 / 534).